A 184-amino-acid chain; its full sequence is Envelope protein 169 (184 aa).

Residues 1–6 are Intravirion-facing; that stretch reads MKKYIK. Residues 7–27 form a helical membrane-spanning segment; that stretch reads MYLVLLIAIILFITILVIFLI. The Virion surface portion of the chain corresponds to 28-184; it reads SGLFYPEQNP…TVMAIPRKVL (157 aa).

It belongs to the asfivirus envelope protein p22 family.

Its subcellular location is the virion membrane. It localises to the host cell membrane. This is Envelope protein 169 from Ornithodoros (relapsing fever ticks).